The chain runs to 134 residues: Small ribosomal subunit protein uS8c (134 aa).

This sequence belongs to the universal ribosomal protein uS8 family. As to quaternary structure, part of the 30S ribosomal subunit.

Its subcellular location is the plastid. It is found in the chloroplast. Its function is as follows. One of the primary rRNA binding proteins, it binds directly to 16S rRNA central domain where it helps coordinate assembly of the platform of the 30S subunit. The sequence is that of Small ribosomal subunit protein uS8c (rps8) from Pelargonium hortorum (Common geranium).